We begin with the raw amino-acid sequence, 329 residues long: NADH-quinone oxidoreductase subunit H 1 (329 aa).

The next 8 helical transmembrane spans lie at 12-32, 78-98, 120-140, 159-179, 191-211, 242-262, 270-290, and 308-328; these read LAKI…LVFA, WLFY…FAVI, VGLL…ALGG, LISY…LAGS, GIWF…SIAA, LFFV…TTFF, WLPP…FFIW, and WKVL…ILML.

It belongs to the complex I subunit 1 family. As to quaternary structure, NDH-1 is composed of 14 different subunits. Subunits NuoA, H, J, K, L, M, N constitute the membrane sector of the complex.

The protein localises to the cell inner membrane. The catalysed reaction is a quinone + NADH + 5 H(+)(in) = a quinol + NAD(+) + 4 H(+)(out). NDH-1 shuttles electrons from NADH, via FMN and iron-sulfur (Fe-S) centers, to quinones in the respiratory chain. The immediate electron acceptor for the enzyme in this species is believed to be ubiquinone. Couples the redox reaction to proton translocation (for every two electrons transferred, four hydrogen ions are translocated across the cytoplasmic membrane), and thus conserves the redox energy in a proton gradient. This subunit may bind ubiquinone. This chain is NADH-quinone oxidoreductase subunit H 1, found in Geobacter metallireducens (strain ATCC 53774 / DSM 7210 / GS-15).